Here is a 396-residue protein sequence, read N- to C-terminus: Ribose-phosphate pyrophosphokinase 1, chloroplastic (396 aa).

Residues 1–36 constitute a chloroplast transit peptide; the sequence is MPLSYSAAAAAAPSPLAARSRGLLRRPPRSSPVVVR. Positions 204, 206, 215, and 219 each coordinate Mg(2+). Residues 290–305 are binding of phosphoribosylpyrophosphate; the sequence is GKVAVMMDDMIDTAGT.

This sequence belongs to the ribose-phosphate pyrophosphokinase family. Requires Mg(2+) as cofactor.

The protein localises to the plastid. The protein resides in the chloroplast. The enzyme catalyses D-ribose 5-phosphate + ATP = 5-phospho-alpha-D-ribose 1-diphosphate + AMP + H(+). In Oryza sativa subsp. japonica (Rice), this protein is Ribose-phosphate pyrophosphokinase 1, chloroplastic.